The sequence spans 141 residues: Envelope glycoprotein L (141 aa).

Residues 1 to 19 form the signal peptide; it reads MKWLLGAYVCLCLANILNA. The interaction with gH stretch occupies residues 21–131; sequence IPNPCCNVFA…TSAIKFKSKY (111 aa).

It belongs to the herpesviridae glycoprotein L family. As to quaternary structure, interacts with glycoprotein H (gH); this interaction is necessary for the correct processing and cell surface expression of gH. The heterodimer gH/gL seems to interact with gB trimers during fusion.

It is found in the virion membrane. The protein localises to the host cell membrane. Its subcellular location is the host Golgi apparatus. The protein resides in the host trans-Golgi network. Functionally, the heterodimer glycoprotein H-glycoprotein L is required for the fusion of viral and plasma membranes leading to virus entry into the host cell. Acts as a functional inhibitor of gH and maintains gH in an inhibited form. Upon binding to host integrins, gL dissociates from gH leading to activation of the viral fusion glycoproteins gB and gH. This is Envelope glycoprotein L from Saimiriine herpesvirus 2 (strain 11) (SaHV-2).